The sequence spans 54 residues: Large ribosomal subunit protein bL33 (54 aa).

Belongs to the bacterial ribosomal protein bL33 family.

The polypeptide is Large ribosomal subunit protein bL33 (Corynebacterium diphtheriae (strain ATCC 700971 / NCTC 13129 / Biotype gravis)).